Consider the following 319-residue polypeptide: Thioredoxin reductase (319 aa).

FAD is bound by residues 11–14 (SGPA), 40–41 (IA), Gln45, Asn54, Val87, Cys145, Asp288, and 295–297 (RQA). Cysteines 142 and 145 form a disulfide.

The protein belongs to the class-II pyridine nucleotide-disulfide oxidoreductase family. Homodimer. It depends on FAD as a cofactor.

The protein resides in the cytoplasm. The catalysed reaction is [thioredoxin]-dithiol + NADP(+) = [thioredoxin]-disulfide + NADPH + H(+). The protein is Thioredoxin reductase (TRR1) of Yarrowia lipolytica (strain CLIB 122 / E 150) (Yeast).